We begin with the raw amino-acid sequence, 302 residues long: Large ribosomal subunit protein uL29m (302 aa).

A mitochondrion-targeting transit peptide spans 1–38; the sequence is MASSGAARPAASRVLQRCQPFSSSTSCAAPVTTWRTLA. Residues 255–302 are disordered; that stretch reads EPVADHLETPETSGQEKVGELSPAGAVDPSTILASKTGKPVTDAPRSS.

Belongs to the universal ribosomal protein uL29 family. Component of the mitochondrial large ribosomal subunit. Mature mitochondrial ribosomes consist of a small (37S) and a large (54S) subunit. The 37S subunit contains at least 33 different proteins and 1 molecule of RNA (15S). The 54S subunit contains at least 45 different proteins and 1 molecule of RNA (21S).

The protein localises to the mitochondrion. The chain is Large ribosomal subunit protein uL29m (MRPL4) from Pyricularia oryzae (strain 70-15 / ATCC MYA-4617 / FGSC 8958) (Rice blast fungus).